The following is a 503-amino-acid chain: Cytochrome P450 monooxygenase ecdH (503 aa).

A helical transmembrane segment spans residues 8-24 (TTLLCGVISSTLLLLLL). N-linked (GlcNAc...) asparagine glycosylation is found at Asn64, Asn324, and Asn413. Cys449 is a heme binding site.

The protein belongs to the cytochrome P450 family. Heme is required as a cofactor.

It is found in the membrane. It participates in antifungal biosynthesis. In terms of biological role, cytochrome P450 monooxygenase; part of the gene cluster that mediates the biosynthesis of echinocandin B, a fungal lipidated cyclic hexapeptide that acts as an antifungal agent. Linoleoyl-AMP, produced by the fatty-acyl-AMP ligase ecdI, is transferred to the initiation carrier domain (T0) of ecdA. The linoleoyl-S-phosphopantetheinyl-T0 is sequentially extended with L-ornithine, L-threonine, L-proline, L-homotyrosine, L-threonine, and 4R-methyl-L-proline to form the linear hexapeptide. Thereafter, the terminal condensation (C7) performs macrocyclization of the NRPS product and the cyclic scaffold is released from ecdA. All six of the amino acid residues are hydroxylated, including 4R,5R-dihydroxy-L-ornithine, 4R-hydroxyl-L-proline, 3S,4S-dihydroxy-L-homotyrosine, and 3S-hydroxyl-4S-methyl-L-prolin. In the pathway, all the hydroxylation reactions are proposed to occur following completion of the cyclic peptide, so the unhydroxylated precursor produced by ecdA will undergo six rounds of hydroxylation. Five hydroxylase genes (ecdG, ecdH, ecdK, htyE and htyF) are embedded within the echinocandin B (ecd) and L-homotyrosine (hty) clusters. This Aspergillus rugulosus (Emericella rugulosa) protein is Cytochrome P450 monooxygenase ecdH.